We begin with the raw amino-acid sequence, 483 residues long: (R)-mandelonitrile beta-glucosyltransferase (483 aa).

H22 functions as the Proton acceptor in the catalytic mechanism. Residue H22 participates in an anthocyanidin binding. D124 acts as the Charge relay in catalysis. The UDP-alpha-D-glucose site is built by T146, Q363, H378, W381, N382, S383, and E386. A401 is a binding site for an anthocyanidin. UDP-alpha-D-glucose is bound by residues E402 and Q403.

Belongs to the UDP-glycosyltransferase family.

The catalysed reaction is (R)-mandelonitrile + UDP-alpha-D-glucose = (R)-prunasin + UDP + H(+). Involved in the biosynthesis of the cyanogenic glycoside (R)-prunasin, a precursor of (R)-amygdalin, which at high concentrations is associated with intense bitterness in kernels of almond. Stereo-selectively glucosylates (R)-mandelonitrile to produce (R)-prunasin. The chain is (R)-mandelonitrile beta-glucosyltransferase from Prunus dulcis (Almond).